The sequence spans 311 residues: Probable deoxyhypusine synthase (311 aa).

Lys-284 serves as the catalytic Nucleophile.

This sequence belongs to the deoxyhypusine synthase family. Requires NAD(+) as cofactor.

The enzyme catalyses [eIF5A protein]-L-lysine + spermidine = [eIF5A protein]-deoxyhypusine + propane-1,3-diamine. It functions in the pathway protein modification; eIF5A hypusination. In terms of biological role, catalyzes the NAD-dependent oxidative cleavage of spermidine and the subsequent transfer of the butylamine moiety of spermidine to the epsilon-amino group of a specific lysine residue of the eIF-5A precursor protein to form the intermediate deoxyhypusine residue. In Sulfurisphaera tokodaii (strain DSM 16993 / JCM 10545 / NBRC 100140 / 7) (Sulfolobus tokodaii), this protein is Probable deoxyhypusine synthase (dys).